The sequence spans 294 residues: Nucleotide-binding protein Swol_0262 (294 aa).

An ATP-binding site is contributed by 15–22 (GLSGAGKT). 65 to 68 (DVRG) is a binding site for GTP.

The protein belongs to the RapZ-like family.

In terms of biological role, displays ATPase and GTPase activities. This is Nucleotide-binding protein Swol_0262 from Syntrophomonas wolfei subsp. wolfei (strain DSM 2245B / Goettingen).